The sequence spans 149 residues: Nucleoside diphosphate kinase (149 aa).

ATP-binding residues include Lys-9, Phe-57, Arg-85, Thr-91, Arg-102, and Asn-112. The active-site Pros-phosphohistidine intermediate is His-115.

The protein belongs to the NDK family. Homotetramer. The cofactor is Mg(2+).

The protein resides in the cytoplasm. It catalyses the reaction a 2'-deoxyribonucleoside 5'-diphosphate + ATP = a 2'-deoxyribonucleoside 5'-triphosphate + ADP. It carries out the reaction a ribonucleoside 5'-diphosphate + ATP = a ribonucleoside 5'-triphosphate + ADP. Functionally, major role in the synthesis of nucleoside triphosphates other than ATP. The ATP gamma phosphate is transferred to the NDP beta phosphate via a ping-pong mechanism, using a phosphorylated active-site intermediate. The protein is Nucleoside diphosphate kinase of Trichodesmium erythraeum (strain IMS101).